Here is a 951-residue protein sequence, read N- to C-terminus: Translation initiation factor IF-2 (951 aa).

Disordered stretches follow at residues 58-255 (AERK…AVVI) and 305-329 (DVSR…KSLS). Residues 101–170 (AEPQYAEPQQ…PQAQPAQPAA (70 aa)) are compositionally biased toward low complexity. Over residues 171 to 216 (PVAPPAPSAQPSAPQPPAAQPRPPQPPMPSRPPPAGYRPAPPPGAR) the composition is skewed to pro residues. The span at 217-234 (PPMSAAPGAPAQPGAAGQ) shows a compositional bias: low complexity. Positions 450-619 (IRPPVVTVMG…ALQSEVLELK (170 aa)) constitute a tr-type G domain. Residues 459–466 (GHVDHGKT) form a G1 region. GTP is bound at residue 459 to 466 (GHVDHGKT). The tract at residues 484–488 (GITQH) is G2. Residues 505 to 508 (DTPG) form a G3 region. GTP contacts are provided by residues 505–509 (DTPGH) and 559–562 (NKVD). Residues 559–562 (NKVD) form a G4 region. Residues 595 to 597 (SAR) form a G5 region.

This sequence belongs to the TRAFAC class translation factor GTPase superfamily. Classic translation factor GTPase family. IF-2 subfamily.

The protein resides in the cytoplasm. Its function is as follows. One of the essential components for the initiation of protein synthesis. Protects formylmethionyl-tRNA from spontaneous hydrolysis and promotes its binding to the 30S ribosomal subunits. Also involved in the hydrolysis of GTP during the formation of the 70S ribosomal complex. In Anaeromyxobacter dehalogenans (strain 2CP-1 / ATCC BAA-258), this protein is Translation initiation factor IF-2.